The primary structure comprises 1820 residues: uncharacterized protein (1820 aa).

Disordered regions lie at residues 1 to 73, 86 to 158, 226 to 260, 286 to 366, 453 to 497, 519 to 548, 577 to 597, 619 to 689, and 735 to 830; these read MQWT…TLSG, TTTT…VRSA, GSSG…NNNY, EERA…QETE, DVQD…RNLS, LSSI…TDTA, GNSS…PPTP, GAGT…TASG, and HSHN…TPSS. Residues 20 to 31 are compositionally biased toward polar residues; that stretch reads NRNSIEQRTPAN. Residues 86-128 are compositionally biased toward low complexity; sequence TTTTTIIESSSSTNTTLEKNSPSPAGGSCSSGSGSLSPAYLQH. Residues 129 to 146 are compositionally biased toward basic residues; it reads HLQHHGSPLHHLQVHHHT. A compositionally biased stretch (low complexity) spans 247-259; it reads SNSSNCSSQFNNN. Residues 265–308 adopt a coiled-coil conformation; that stretch reads VDSLDDMLRKLTELEQRVIEAEERAEEAEDKVRAMEQRLSEWPK. Over residues 294–305 the composition is skewed to basic and acidic residues; that stretch reads DKVRAMEQRLSE. The span at 346-358 shows a compositional bias: low complexity; it reads ASGGATAGAAGSG. Positions 362–438 form a coiled coil; sequence TQETEKTITS…LKNHIANQSQ (77 aa). The segment covering 453–463 has biased composition (polar residues); the sequence is DVQDFTGSGSN. Phosphoserine occurs at positions 542 and 543. Residues 623–632 are compositionally biased toward low complexity; the sequence is GTSTAESTAS. The span at 655 to 669 shows a compositional bias: gly residues; sequence HGSGTGIGTGDGHGT. Over residues 738–769 the composition is skewed to low complexity; the sequence is NSSSTDNTETSTSGSASSPSKSLKTSSSLSPA. Residues 787–818 are compositionally biased toward polar residues; the sequence is QSRTSTTPSSRINQHLQPSQHQHHTLSNQNHG. PH domains lie at 909-1003 and 1017-1124; these read SLEK…NVQR and KPTV…VVSG. 3 positions are modified to phosphoserine: S1073, S1075, and S1077. The MyTH4 domain maps to 1159-1378; that stretch reads HTKDTITAPL…PSRMEVLSIL (220 aa). In terms of domain architecture, FERM spans 1389–1712; the sequence is HAIPVHMMNS…DYMNALGHTV (324 aa). Disordered regions lie at residues 1713–1748 and 1764–1820; these read PGTP…ATGF and ATHT…QRIK. A compositionally biased stretch (polar residues) spans 1714-1724; sequence GTPQMNSLTRN. A compositionally biased stretch (low complexity) spans 1764–1781; it reads ATHTLNSNHSHTLSSSHH. Residues 1805–1820 show a composition bias toward basic and acidic residues; the sequence is HQPDILKSTPDHQRIK.

This is an uncharacterized protein from Drosophila melanogaster (Fruit fly).